Consider the following 525-residue polypeptide: GMP synthase [glutamine-hydrolyzing] (525 aa).

The Glutamine amidotransferase type-1 domain maps to Arg-9–Leu-207. Catalysis depends on Cys-86, which acts as the Nucleophile. Active-site residues include His-181 and Glu-183. A GMPS ATP-PPase domain is found at Trp-208–Arg-400. Ser-235–Ser-241 provides a ligand contact to ATP.

In terms of assembly, homodimer.

The enzyme catalyses XMP + L-glutamine + ATP + H2O = GMP + L-glutamate + AMP + diphosphate + 2 H(+). It participates in purine metabolism; GMP biosynthesis; GMP from XMP (L-Gln route): step 1/1. Its function is as follows. Catalyzes the synthesis of GMP from XMP. This Enterobacter sp. (strain 638) protein is GMP synthase [glutamine-hydrolyzing].